Reading from the N-terminus, the 466-residue chain is Argininosuccinate lyase (466 aa).

Belongs to the lyase 1 family. Argininosuccinate lyase subfamily.

The protein localises to the cytoplasm. It catalyses the reaction 2-(N(omega)-L-arginino)succinate = fumarate + L-arginine. It participates in amino-acid biosynthesis; L-arginine biosynthesis; L-arginine from L-ornithine and carbamoyl phosphate: step 3/3. This chain is Argininosuccinate lyase, found in Roseobacter denitrificans (strain ATCC 33942 / OCh 114) (Erythrobacter sp. (strain OCh 114)).